Reading from the N-terminus, the 362-residue chain is Aminomethyltransferase (362 aa).

The protein belongs to the GcvT family. The glycine cleavage system is composed of four proteins: P, T, L and H.

It carries out the reaction N(6)-[(R)-S(8)-aminomethyldihydrolipoyl]-L-lysyl-[protein] + (6S)-5,6,7,8-tetrahydrofolate = N(6)-[(R)-dihydrolipoyl]-L-lysyl-[protein] + (6R)-5,10-methylene-5,6,7,8-tetrahydrofolate + NH4(+). In terms of biological role, the glycine cleavage system catalyzes the degradation of glycine. The protein is Aminomethyltransferase of Pseudothermotoga lettingae (strain ATCC BAA-301 / DSM 14385 / NBRC 107922 / TMO) (Thermotoga lettingae).